A 225-amino-acid chain; its full sequence is C-reactive protein (225 aa).

A signal peptide spans 1 to 19 (MEKLLWCLLIMISFSRTFG). The Pentraxin (PTX) domain occupies 24–225 (FKKAFVFPKE…DVFIKPQLWS (202 aa)). Cys55 and Cys116 are oxidised to a cystine. Ca(2+)-binding residues include Asn80, Glu157, Gln158, Asp159, and Gln169.

The protein belongs to the pentraxin family. Homopentamer. Pentraxin (or pentaxin) have a discoid arrangement of 5 non-covalently bound subunits. Interacts with FCN1; may regulate monocyte activation by FCN1. The cofactor is Ca(2+). As to expression, found in plasma.

The protein localises to the secreted. Its function is as follows. Displays several functions associated with host defense: it promotes agglutination, bacterial capsular swelling, phagocytosis and complement fixation through its calcium-dependent binding to phosphorylcholine. Can interact with DNA and histones and may scavenge nuclear material released from damaged circulating cells. In Mus musculus (Mouse), this protein is C-reactive protein (Crp).